The following is a 445-amino-acid chain: MHSQIWVVSTLLISIVLIVLTIVKFKFHPFLALLLASFFVGTMMGMGPLDMVNAIESGIGGTLGFLAAVIGLGTILGKMMEVSGAAERIGLTLQRCRWLSADVIMVLVGLICGITLFVEVGVVLLIPLAFSIAKKTNTSLLKLAIPLCTALMAVHCVVPPHPAALYVANKLGADIGSVIVYGLLVGLMASLIGGPLFLKFLGQRLPFKPVPTEFADLKVRDEKTLPSLGATLFTVLLPIALMLVKTIAELNMARESGLYTLLEFIGNPITATFIAVFVAYYVLGIRQHMSMGTMLTHTENGFGSIANILLIIGAGGAFNAILKSSSLADTLAVILSNMHMHPILLAWLVALILHAAVGSATVAMMGATAIVAPMLPLYPDISPEIIAIAIGSGAIGCTIVTDSLFWLVKQYCGATLNETFKYYTTATFIASVIALAGTFLLSFII.

A run of 12 helical transmembrane segments spans residues 5–25 (IWVV…IVKF), 29–49 (PFLA…MGPL), 57–77 (SGIG…TILG), 106–126 (VLVG…VLLI), 140–160 (LLKL…VVPP), 178–198 (VIVY…PLFL), 224–244 (TLPS…LMLV), 265–285 (IGNP…VLGI), 302–322 (FGSI…NAIL), 343–363 (ILLA…ATVA), 385–405 (IIAI…DSLF), and 425–445 (TATF…SFII).

Belongs to the GntP permease family.

It localises to the cell inner membrane. Uptake of D-serine is inhibited by carbonyl cyanide m-chlorophenylhydrazone (CCCP), and at high concentrations of D-threonine, stimulated by D-cycloserine and not affected by D-alanine or glycine. Its function is as follows. Protein that allows transport of D-serine across the inner membrane, does not transport D-alanine nor probably glycine. Is probably a H(+) symporter, as CCCP inhibits transport. Transports D-serine more efficiently than CycA. The sequence is that of D-serine transporter DsdX (dsdX) from Escherichia coli O6:H1 (strain CFT073 / ATCC 700928 / UPEC).